Consider the following 123-residue polypeptide: UPF0102 protein Psyr_4114 (123 aa).

Belongs to the UPF0102 family.

This is UPF0102 protein Psyr_4114 from Pseudomonas syringae pv. syringae (strain B728a).